A 145-amino-acid chain; its full sequence is Snaclec salmorin subunit B (145 aa).

A signal peptide spans 1–23; it reads MGRFIFVSFGLLVVFVSLSGTGA. Disulfide bonds link Cys-25/Cys-36, Cys-53/Cys-141, and Cys-118/Cys-133. A C-type lectin domain is found at 32 to 142; it reads YEGHCYKLFN…CRMEAYFVCE (111 aa). 2 residues coordinate Ca(2+): Ser-64 and Glu-70. Residue Glu-142 coordinates Ca(2+).

The protein belongs to the snaclec family. In terms of assembly, heterodimer of subunits A and B; disulfide-linked. Expressed by the venom gland.

Its subcellular location is the secreted. In terms of biological role, inhibits thrombin-induced fibrinogen clotting and factor Xa-induced prothrombin activation. Binds to thrombin and prothrombin exosites. In Gloydius brevicauda (Korean slamosa snake), this protein is Snaclec salmorin subunit B.